A 1717-amino-acid polypeptide reads, in one-letter code: Protein MON2 homolog (1717 aa).

N-acetylserine is present on S2. Residues S205 and S537 each carry the phosphoserine modification. The interval 511 to 538 (ETECQTTTEEGSSPTQSTEQQDLQSTSD) is disordered. A compositionally biased stretch (polar residues) spans 522-538 (SSPTQSTEQQDLQSTSD).

This sequence belongs to the MON2 family. In terms of assembly, homooligomer. Heterotrimer with ATP9A and DOP1B; this interaction is retromer-independent. Interacts with SNX3.

It is found in the early endosome membrane. Functionally, plays a role in regulating membrane trafficking of cargo proteins. Together with ATP9A and DOP1B, regulates SNX3 retromer-mediated endosomal sorting of WLS away from lysosomal degradation. The protein is Protein MON2 homolog of Homo sapiens (Human).